The primary structure comprises 643 residues: Alpha-dioxygenase PIOX (643 aa).

Catalysis depends on His167, which acts as the Proton acceptor. Asp168 serves as a coordination point for Ca(2+). Residue His172 participates in heme b binding. Positions 220, 222, 224, and 226 each coordinate Ca(2+). Residues His392, Arg489, and Arg493 each coordinate heme b.

Belongs to the peroxidase family. Heme b serves as cofactor. The cofactor is Ca(2+).

It catalyses the reaction a 1,2-saturated fatty acid + O2 = a (2R)-2-hydroperoxy fatty acid. The enzyme catalyses (9Z,12Z,15Z)-octadecatrienoate + O2 = (R)-2-hydroperoxy-(9Z,12Z,15Z)-octadecatrienoate. It carries out the reaction (9Z,12Z)-octadecadienoate + O2 = (2R,9Z,12Z)-2-hydroperoxyoctadecadienoate. Functionally, alpha-dioxygenase that catalyzes the primary oxygenation step of a variety of 14-20 carbon fatty acids, containing up to three unsaturated bonds, into their corresponding 2R-hydroperoxides. Involved in the production of oxylipins that function in cell signaling, wound healing, and protection from infection. This Nicotiana tabacum (Common tobacco) protein is Alpha-dioxygenase PIOX.